The chain runs to 504 residues: Endochitinase (504 aa).

The first 22 residues, methionine 1–glycine 22, serve as a signal peptide directing secretion. The region spanning tyrosine 23 to glutamate 392 is the GH18 domain. A disulfide bond links cysteine 27 and cysteine 52. Residues threonine 78–glutamate 79 and glycine 105–asparagine 108 each bind chitin. Glutamate 148 functions as the Proton donor in the catalytic mechanism. Chitin contacts are provided by residues tyrosine 149, methionine 212–aspartate 215, and tryptophan 362. The interval leucine 389–glutamate 450 is disordered. Residues proline 396–threonine 408 show a composition bias toward low complexity. Repeat copies occupy residues glutamate 407–serine 420 and glutamate 421–serine 434. A 3 X 14 AA approximate tandem repeats of E-T-E-A-Y-[ED]-T-D-E-T-E-E-T-S region spans residues glutamate 407 to glycine 448. Residues glutamate 409 to glutamate 435 show a composition bias toward acidic residues. The 3; approximate repeat unit spans residues glutamate 435–glycine 448. One can recognise a Chitin-binding type-2 domain in the interval glycine 448 to isoleucine 504. A disulfide bridge links cysteine 480 with cysteine 493.

It belongs to the glycosyl hydrolase 18 family. Chitinase class II subfamily. Post-translationally, O-glycosylated.

The catalysed reaction is Random endo-hydrolysis of N-acetyl-beta-D-glucosaminide (1-&gt;4)-beta-linkages in chitin and chitodextrins.. Its function is as follows. Microfilarial chitinase, which may function to degrade chitin-containing structures in the micro-filaria or in its mosquito vector during parasite development and transmission. The polypeptide is Endochitinase (Brugia malayi (Filarial nematode worm)).